The sequence spans 601 residues: Protein nubbin (601 aa).

The segment covering M1–L25 has biased composition (basic and acidic residues). Disordered stretches follow at residues M1 to A32, S49 to Q94, K121 to S158, P351 to D425, and I581 to H601. A compositionally biased stretch (low complexity) spans S49 to S68. The span at N135–A157 shows a compositional bias: polar residues. Low complexity predominate over residues T384 to A415. The POU-specific domain occupies E421–D495. Residues R523–N582 constitute a DNA-binding region (homeobox). Acidic residues predominate over residues A591–H601.

This sequence belongs to the POU transcription factor family. Class-2 subfamily. In terms of tissue distribution, initial expression in cellular blastoderm stage, then in ectodermal stripes during germband extension. Broad expression in the neuroectoderm followed by limitation to discrete subsets of CNS cells, and expression in specific PNS neurons and support cells.

Its subcellular location is the nucleus. Functionally, DNA-binding regulatory protein implicated in early development. Involved in neuronal cell fate decision. Repressed directly or indirectly by the BX-C homeotic proteins. This Drosophila melanogaster (Fruit fly) protein is Protein nubbin (nub).